The chain runs to 132 residues: Small ribosomal subunit protein bS6 (132 aa).

Belongs to the bacterial ribosomal protein bS6 family.

Functionally, binds together with bS18 to 16S ribosomal RNA. This Chlorobium chlorochromatii (strain CaD3) protein is Small ribosomal subunit protein bS6.